Reading from the N-terminus, the 394-residue chain is Elongation factor Tu (394 aa).

The tr-type G domain maps to 10-204 (KPHVNVGTIG…AVDSYIPQPE (195 aa)). Residues 19–26 (GHVDHGKT) are G1. 19–26 (GHVDHGKT) provides a ligand contact to GTP. Thr26 serves as a coordination point for Mg(2+). The G2 stretch occupies residues 60-64 (GITIS). Residues 81-84 (DCPG) are G3. Residues 81–85 (DCPGH) and 136–139 (NKCD) contribute to the GTP site. A G4 region spans residues 136 to 139 (NKCD). Positions 174 to 176 (SAV) are G5.

Belongs to the TRAFAC class translation factor GTPase superfamily. Classic translation factor GTPase family. EF-Tu/EF-1A subfamily. As to quaternary structure, monomer.

Its subcellular location is the cytoplasm. It carries out the reaction GTP + H2O = GDP + phosphate + H(+). GTP hydrolase that promotes the GTP-dependent binding of aminoacyl-tRNA to the A-site of ribosomes during protein biosynthesis. This chain is Elongation factor Tu, found in Akkermansia muciniphila (strain ATCC BAA-835 / DSM 22959 / JCM 33894 / BCRC 81048 / CCUG 64013 / CIP 107961 / Muc).